Here is a 100-residue protein sequence, read N- to C-terminus: Large ribosomal subunit protein uL23 (100 aa).

It belongs to the universal ribosomal protein uL23 family. Part of the 50S ribosomal subunit. Contacts protein L29, and trigger factor when it is bound to the ribosome.

In terms of biological role, one of the early assembly proteins it binds 23S rRNA. One of the proteins that surrounds the polypeptide exit tunnel on the outside of the ribosome. Forms the main docking site for trigger factor binding to the ribosome. This chain is Large ribosomal subunit protein uL23, found in Baumannia cicadellinicola subsp. Homalodisca coagulata.